Here is a 216-residue protein sequence, read N- to C-terminus: Transmembrane emp24 domain-containing protein eca (216 aa).

Residues M1–G20 form the signal peptide. The Lumenal portion of the chain corresponds to L21 to S182. The 97-residue stretch at R30–V126 folds into the GOLD domain. Residues A134–N164 adopt a coiled-coil conformation. The chain crosses the membrane as a helical span at residues R183–M203. Topologically, residues R204–V216 are cytoplasmic. A Prevents secretion from ER motif is present at residues K213–V216.

It belongs to the EMP24/GP25L family.

The protein localises to the endoplasmic reticulum membrane. Eca and bai are essential, though not redundant, for dorsoventral patterning of the embryo. Specifically required during early embryogenesis for the activity of maternal tkv, while the zygotic tkv is not affected. Involved in Golgi organization. The polypeptide is Transmembrane emp24 domain-containing protein eca (Drosophila melanogaster (Fruit fly)).